The primary structure comprises 455 residues: Chromosomal replication initiator protein DnaA (455 aa).

A domain I, interacts with DnaA modulators region spans residues 1–74; it reads MFNFEKFWQH…IQSAYGYAGV (74 aa). Positions 74–117 are domain II; sequence VELLPVFQISEDSDTPERIVTPEPQHNLQTTPTRAPQREFAKDL. The domain III, AAA+ region stretch occupies residues 118 to 334; sequence KLNEKYTFDN…GALVKVQAYA (217 aa). Positions 162, 164, 165, and 166 each coordinate ATP. Residues 335 to 455 are domain IV, binds dsDNA; sequence TIEKADIDIN…VFDLKQMLEH (121 aa).

This sequence belongs to the DnaA family. Oligomerizes as a right-handed, spiral filament on DNA at oriC.

The protein resides in the cytoplasm. Plays an essential role in the initiation and regulation of chromosomal replication. ATP-DnaA binds to the origin of replication (oriC) to initiate formation of the DNA replication initiation complex once per cell cycle. Binds the DnaA box (a 9 base pair repeat at the origin) and separates the double-stranded (ds)DNA. Forms a right-handed helical filament on oriC DNA; dsDNA binds to the exterior of the filament while single-stranded (ss)DNA is stabiized in the filament's interior. The ATP-DnaA-oriC complex binds and stabilizes one strand of the AT-rich DNA unwinding element (DUE), permitting loading of DNA polymerase. After initiation quickly degrades to an ADP-DnaA complex that is not apt for DNA replication. Binds acidic phospholipids. This is Chromosomal replication initiator protein DnaA from Lactobacillus acidophilus (strain ATCC 700396 / NCK56 / N2 / NCFM).